A 206-amino-acid chain; its full sequence is Probable nicotinate-nucleotide adenylyltransferase (206 aa).

This sequence belongs to the NadD family.

It carries out the reaction nicotinate beta-D-ribonucleotide + ATP + H(+) = deamido-NAD(+) + diphosphate. It participates in cofactor biosynthesis; NAD(+) biosynthesis; deamido-NAD(+) from nicotinate D-ribonucleotide: step 1/1. Its function is as follows. Catalyzes the reversible adenylation of nicotinate mononucleotide (NaMN) to nicotinic acid adenine dinucleotide (NaAD). This chain is Probable nicotinate-nucleotide adenylyltransferase, found in Gloeobacter violaceus (strain ATCC 29082 / PCC 7421).